The sequence spans 347 residues: MSDLGAVVALLLWGQLFAVDSGNDVTDIADDGCPKPPMIANGYVEHLVRYQCKNYYRLRTEGDGVYTLNNEKQWTNKAVGDKLPECEAVCGKPKNPADAVQRILGGHLDAKGSFPWQAKMVSRHNLTTGATLINEQWLLTTAKNLFLNHSENATAKDIAPTLTLYVGKKQLVEIEKVVLYPNYSQIDIGLIKLKQKVPVNERVMPICLPSKDYAEVGRVGYVSGWGRNANFNFTDHLKYVMLPVADQYDCIKHYEGSTVPEKKTPKSPVGEQPILNEHTFCAGMSKYQEDTCYGDAGSAFAVHDLEKDTWYAAGILSFDKSCGVAEYGVYVKATSIQDWVQKTIAEN.

Residues 1-18 form the signal peptide; sequence MSDLGAVVALLLWGQLFA. One can recognise a Sushi domain in the interval 31 to 88; it reads DGCPKPPMIANGYVEHLVRYQCKNYYRLRTEGDGVYTLNNEKQWTNKAVGDKLPECEA. 2 disulfide bridges follow: Cys52–Cys86 and Cys90–Cys207. The segment at 103-347 is serine protease; that stretch reads ILGGHLDAKG…DWVQKTIAEN (245 aa). N-linked (GlcNAc...) asparagine glycans are attached at residues Asn125, Asn148, Asn152, Asn182, and Asn232. Disulfide bonds link Cys250–Cys281 and Cys292–Cys322. An interaction with CD163 region spans residues 259–264; that stretch reads VPEKKT.

Belongs to the peptidase S1 family. In terms of assembly, tetramer of two alpha and two beta chains; disulfide-linked. The hemoglobin/haptoglobin complex is composed of a haptoglobin dimer bound to two hemoglobin alpha-beta dimers. Interacts with CD163. Interacts with ERGIC3. Expressed by the liver and secreted in plasma.

The protein resides in the secreted. Its function is as follows. As a result of hemolysis, hemoglobin is found to accumulate in the kidney and is secreted in the urine. Haptoglobin captures, and combines with free plasma hemoglobin to allow hepatic recycling of heme iron and to prevent kidney damage. Haptoglobin also acts as an antioxidant, has antibacterial activity and plays a role in modulating many aspects of the acute phase response. Hemoglobin/haptoglobin complexes are rapidly cleared by the macrophage CD163 scavenger receptor expressed on the surface of liver Kupfer cells through an endocytic lysosomal degradation pathway. This Papio hamadryas (Hamadryas baboon) protein is Haptoglobin (HP).